A 166-amino-acid polypeptide reads, in one-letter code: Interferon gamma (166 aa).

The signal sequence occupies residues Met1–Cys23. Residue Gln24 is modified to Pyrrolidone carboxylic acid. Residues Asn39 and Asn106 are each glycosylated (N-linked (GlcNAc...) asparagine).

The protein belongs to the type II (or gamma) interferon family. Homodimer. Interacts with IFNGR1 (via extracellular domain); this interaction promotes IFNGR1 dimerization. In terms of tissue distribution, released primarily from activated T lymphocytes.

It localises to the secreted. Its function is as follows. Type II interferon produced by immune cells such as T-cells and NK cells that plays crucial roles in antimicrobial, antiviral, and antitumor responses by activating effector immune cells and enhancing antigen presentation. Primarily signals through the JAK-STAT pathway after interaction with its receptor IFNGR1 to affect gene regulation. Upon IFNG binding, IFNGR1 intracellular domain opens out to allow association of downstream signaling components JAK2, JAK1 and STAT1, leading to STAT1 activation, nuclear translocation and transcription of IFNG-regulated genes. Many of the induced genes are transcription factors such as IRF1 that are able to further drive regulation of a next wave of transcription. Plays a role in class I antigen presentation pathway by inducing a replacement of catalytic proteasome subunits with immunoproteasome subunits. In turn, increases the quantity, quality, and repertoire of peptides for class I MHC loading. Increases the efficiency of peptide generation also by inducing the expression of activator PA28 that associates with the proteasome and alters its proteolytic cleavage preference. Up-regulates as well MHC II complexes on the cell surface by promoting expression of several key molecules such as cathepsins B/CTSB, H/CTSH, and L/CTSL. Participates in the regulation of hematopoietic stem cells during development and under homeostatic conditions by affecting their development, quiescence, and differentiation. The sequence is that of Interferon gamma (IFNG) from Camelus bactrianus (Bactrian camel).